The following is a 245-amino-acid chain: Fibroblast growth factor 3 (245 aa).

Residues 1–17 (MGLIWLLLLSLLEPSWP) form the signal peptide. The N-linked (GlcNAc...) asparagine glycan is linked to N65. 2 disordered regions span residues 137–181 (GSSG…FLPR) and 195–245 (QSSQ…LAVA). The span at 161–173 (GRPRRGFKTRRTQ) shows a compositional bias: basic residues. Residues 226–238 (TLSTRATPSTQLH) are compositionally biased toward polar residues.

The protein belongs to the heparin-binding growth factors family. As to quaternary structure, interacts with FGFR1 and FGFR2. Affinity between fibroblast growth factors (FGFs) and their receptors is increased by heparan sulfate glycosaminoglycans that function as coreceptors. Post-translationally, glycosylated.

The protein localises to the nucleus. The protein resides in the endoplasmic reticulum. It is found in the golgi apparatus. Functionally, plays an important role in the regulation of embryonic development, cell proliferation, and cell differentiation. Required for normal ear development. This chain is Fibroblast growth factor 3 (Fgf3), found in Mus musculus (Mouse).